Here is a 55-residue protein sequence, read N- to C-terminus: UPF0434 protein Erum1340/ERWE_CDS_01300 (55 aa).

This sequence belongs to the UPF0434 family.

This is UPF0434 protein Erum1340/ERWE_CDS_01300 from Ehrlichia ruminantium (strain Welgevonden).